Consider the following 1191-residue polypeptide: Putative glycoside hydrolase 22789 (1191 aa).

The segment covering 173 to 187 (PSSSGASSVLPSPSA) has biased composition (low complexity). The interval 173 to 221 (PSSSGASSVLPSPSAHTPDAATDANHLPNPDPASGRQELTRAGRPARKK) is disordered.

The protein belongs to the glycoside hydrolase-like 3 (GHL3) family.

This Monosiga brevicollis (Choanoflagellate) protein is Putative glycoside hydrolase 22789.